The chain runs to 126 residues: EDNCKLKFLELKKRIFRFIIFRIDGQQVVVEKLGNPQETYDDFTASLPADECRYAVFDFDFTTNENCQKSKIFFIAWSPDSSRVRMKMVYASSKDRFKRELDGIQVELQATDPSEMSFDIIKSRAL.

Residues 1–126 (EDNCKLKFLE…SFDIIKSRAL (126 aa)) enclose the ADF-H domain.

This sequence belongs to the actin-binding proteins ADF family. As to expression, preferentially in mature anther.

Functionally, actin-depolymerizing protein. Severs actin filaments (F-actin) and binds to actin monomers. This is Actin-depolymerizing factor from Brassica napus (Rape).